Consider the following 648-residue polypeptide: MSLKWSACWVALGQLLCSCALALKGGMLFPKESPSRELKALDGLWHFRADLSNNRLQGFEQQWYRQPLRESGPVLDMPVPSSFNDITQEAALRDFIGWVWYEREAILPRRWTQDTDMRVVLRINSAHYYAVVWVNGIHVVEHEGGHLPFEADISKLVQSGPLTTCRITIAINNTLTPHTLPPGTIVYKTDTSMYPKGYFVQDTSFDFFNYAGLHRSVVLYTTPTTYIDDITVITNVEQDIGLVTYWISVQGSEHFQLEVQLLDEGGKVVAHGTGNQGQLQVPSANLWWPYLMHEHPAYMYSLEVKVTTTESVTDYYTLPIGIRTVAVTKSKFLINGKPFYFQGVNKHEDSDIRGKGFDWPLLVKDFNLLRWLGANSFRTSHYPYSEEVLQLCDRYGIVVIDECPGVGIVLPQSFGNESLRHHLEVMEELVRRDKNHPAVVMWSVANEPSSALKPAAYYFKTLITHTKALDLTRPVTFVSNAKYDADLGAPYVDVICVNSYFSWYHDYGHLEVIQPQLNSQFENWYKTHQKPIIQSEYGADAIPGIHEDPPRMFSEEYQKAVLENYHSVLDQKRKEYVVGELIWNFADFMTNQSPLRVIGNKKGIFTRQRQPKTSAFILRERYWRIANETGGHGSGPRTQCFGSRPFTF.

Positions 1-22 (MSLKWSACWVALGQLLCSCALA) are cleaved as a signal peptide. Residues Asn172 and Asn416 are each glycosylated (N-linked (GlcNAc...) asparagine). Glu447 serves as the catalytic Proton donor. Asn627 carries N-linked (GlcNAc...) asparagine glycosylation.

This sequence belongs to the glycosyl hydrolase 2 family. Homotetramer.

The protein resides in the lysosome. It is found in the endoplasmic reticulum. It carries out the reaction a beta-D-glucuronoside + H2O = D-glucuronate + an alcohol. With respect to regulation, inhibited by L-aspartic acid. Plays an important role in the degradation of dermatan and keratan sulfates. This Mus musculus (Mouse) protein is Beta-glucuronidase (Gusb).